Consider the following 246-residue polypeptide: Sensory transduction protein LytT (246 aa).

Positions 4–120 (HIMIAEDERL…RFKIAMNRIR (117 aa)) constitute a Response regulatory domain. Aspartate 55 is modified (4-aspartylphosphate). The HTH LytTR-type domain maps to 136–243 (LVVNLDEKMM…AKGLFDALQG (108 aa)).

In terms of processing, phosphorylated by LytS.

The protein resides in the cytoplasm. In terms of biological role, member of the two-component regulatory system LytS/LytT that probably regulates genes involved in cell wall metabolism. The protein is Sensory transduction protein LytT (lytT) of Oceanobacillus iheyensis (strain DSM 14371 / CIP 107618 / JCM 11309 / KCTC 3954 / HTE831).